The following is a 263-amino-acid chain: Trans-2-decenoyl-[acyl-carrier-protein] isomerase (263 aa).

It belongs to the enoyl-CoA hydratase/isomerase family. Homotetramer.

It carries out the reaction (2E)-decenoyl-[ACP] = (3Z)-decenoyl-[ACP]. Its pathway is lipid metabolism; fatty acid biosynthesis. In terms of biological role, catalyzes the isomerization of trans-2-decenoyl-ACP to cis-3-decenoyl-ACP. Required for survival at low pH. In Streptococcus mutans serotype c (strain ATCC 700610 / UA159), this protein is Trans-2-decenoyl-[acyl-carrier-protein] isomerase (fabM).